The sequence spans 238 residues: Peptidyl-tRNA hydrolase (238 aa).

Residue Tyr14 coordinates tRNA. His19 (proton acceptor) is an active-site residue. 3 residues coordinate tRNA: Phe64, Asn66, and Asn112. Over residues 190–202 (KTEEPAPKPEKKT) the composition is skewed to basic and acidic residues. The disordered stretch occupies residues 190–225 (KTEEPAPKPEKKTVAKSHIHQARNHNQPRMPESGPM). The segment covering 203–212 (VAKSHIHQAR) has biased composition (basic residues).

The protein belongs to the PTH family. Monomer.

Its subcellular location is the cytoplasm. It catalyses the reaction an N-acyl-L-alpha-aminoacyl-tRNA + H2O = an N-acyl-L-amino acid + a tRNA + H(+). Functionally, hydrolyzes ribosome-free peptidyl-tRNAs (with 1 or more amino acids incorporated), which drop off the ribosome during protein synthesis, or as a result of ribosome stalling. In terms of biological role, catalyzes the release of premature peptidyl moieties from peptidyl-tRNA molecules trapped in stalled 50S ribosomal subunits, and thus maintains levels of free tRNAs and 50S ribosomes. The chain is Peptidyl-tRNA hydrolase from Rhizobium rhizogenes (strain K84 / ATCC BAA-868) (Agrobacterium radiobacter).